The primary structure comprises 244 residues: tRNA pseudouridine synthase A (244 aa).

Asp-52 (nucleophile) is an active-site residue. Residue Tyr-110 participates in substrate binding.

The protein belongs to the tRNA pseudouridine synthase TruA family. As to quaternary structure, homodimer.

It catalyses the reaction uridine(38/39/40) in tRNA = pseudouridine(38/39/40) in tRNA. Formation of pseudouridine at positions 38, 39 and 40 in the anticodon stem and loop of transfer RNAs. This chain is tRNA pseudouridine synthase A, found in Thermoanaerobacter pseudethanolicus (strain ATCC 33223 / 39E) (Clostridium thermohydrosulfuricum).